A 1277-amino-acid polypeptide reads, in one-letter code: Clustered mitochondria protein 1 (1277 aa).

2 disordered regions span residues 19 to 39 and 148 to 176; these read LPKEDNHSHNTKHLKKTQSSK and LPLGPIKERSKQEEKDEKSDPEEKKNTFK. The segment covering 27–36 has biased composition (basic residues); that stretch reads HNTKHLKKTQ. The span at 153–176 shows a compositional bias: basic and acidic residues; that stretch reads IKERSKQEEKDEKSDPEEKKNTFK. Residues 339-596 form the Clu domain; sequence PPNNPDYLRL…NTYPLDINFA (258 aa). TPR repeat units lie at residues 704–738, 1020–1053, and 1148–1181; these read GINMRYLGKIIELSQKELDSQIVHYEQNLKAVEQD, AEKYLSLSAIYNKLALYPEAIAFCRKACTIYERV, and GYTESRLGNLFAALKDFHRALEHITVTQGIFTKQ. The segment at 1212–1277 is disordered; it reads LAQDQMSTTG…TNNKKKHGKK (66 aa). The span at 1235–1249 shows a compositional bias: basic and acidic residues; that stretch reads KKDDVKPELANKSVD. Phosphoserine is present on serine 1247. Residues 1264-1277 are compositionally biased toward basic residues; the sequence is SKNKTNNKKKHGKK.

Belongs to the CLU family. As to quaternary structure, may associate with the eukaryotic translation initiation factor 3 (eIF-3) complex. Associates with the 80S ribosome.

The protein resides in the cytoplasm. In terms of biological role, mRNA-binding protein involved in proper cytoplasmic distribution of mitochondria. In Saccharomyces cerevisiae (strain ATCC 204508 / S288c) (Baker's yeast), this protein is Clustered mitochondria protein 1.